The sequence spans 352 residues: Glycerol-3-phosphate dehydrogenase [NAD(P)+] (352 aa).

Residues serine 11, tryptophan 12, arginine 32, and lysine 105 each contribute to the NADPH site. Residues lysine 105, glycine 133, and serine 135 each contribute to the sn-glycerol 3-phosphate site. Alanine 137 is a binding site for NADPH. Sn-glycerol 3-phosphate-binding residues include lysine 188, aspartate 241, serine 251, arginine 252, and asparagine 253. Lysine 188 acts as the Proton acceptor in catalysis. Arginine 252 provides a ligand contact to NADPH. Residues valine 276 and glutamate 278 each contribute to the NADPH site.

Belongs to the NAD-dependent glycerol-3-phosphate dehydrogenase family.

It is found in the cytoplasm. It catalyses the reaction sn-glycerol 3-phosphate + NAD(+) = dihydroxyacetone phosphate + NADH + H(+). It carries out the reaction sn-glycerol 3-phosphate + NADP(+) = dihydroxyacetone phosphate + NADPH + H(+). Its pathway is membrane lipid metabolism; glycerophospholipid metabolism. Its function is as follows. Catalyzes the reduction of the glycolytic intermediate dihydroxyacetone phosphate (DHAP) to sn-glycerol 3-phosphate (G3P), the key precursor for phospholipid synthesis. This chain is Glycerol-3-phosphate dehydrogenase [NAD(P)+], found in Desulfitobacterium hafniense (strain Y51).